Consider the following 137-residue polypeptide: Glutamate mutase sigma subunit (137 aa).

The B12-binding domain occupies 3–137 (KKTIVLGVIG…ADLKEDLNIK (135 aa)). Adenosylcob(III)alamin contacts are provided by residues 13 to 17 (SDCHA), His16, 61 to 63 (SSL), and 93 to 97 (NIVVG).

This sequence belongs to the methylaspartate mutase GlmS subunit family. Heterotetramer composed of 2 epsilon subunits (GlmE) and 2 sigma subunits (GlmS). GlmE exists as a homodimer and GlmS as a monomer. The cofactor is adenosylcob(III)alamin.

It catalyses the reaction (2S,3S)-3-methyl-L-aspartate = L-glutamate. It participates in amino-acid degradation; L-glutamate degradation via mesaconate pathway; acetate and pyruvate from L-glutamate: step 1/4. In terms of biological role, catalyzes the carbon skeleton rearrangement of L-glutamate to L-threo-3-methylaspartate ((2S,3S)-3-methylaspartate). The polypeptide is Glutamate mutase sigma subunit (Clostridium tetani (strain Massachusetts / E88)).